The following is a 61-amino-acid chain: Large ribosomal subunit protein uL30 (61 aa).

It belongs to the universal ribosomal protein uL30 family. In terms of assembly, part of the 50S ribosomal subunit.

This is Large ribosomal subunit protein uL30 from Chlorobium luteolum (strain DSM 273 / BCRC 81028 / 2530) (Pelodictyon luteolum).